Consider the following 478-residue polypeptide: Oxidative stress-induced growth inhibitor 1 (478 aa).

Residue S12 is modified to Phosphoserine.

The protein belongs to the OKL38 family. NADPH serves as cofactor.

It is found in the midbody. Its function is as follows. Monooxygenase catalytic activity. Involved in regulation of cytokinesis; promotes RHOA activity, probably acting locally at the midbody in late cytokinesis. Monooxygenase activity is involved in stabilizing transient structures between daughter cells, termed intercellular bridges, before abscission. Regulates differentiation and proliferation through the regulation of cell death. The protein is Oxidative stress-induced growth inhibitor 1 of Mus musculus (Mouse).